Reading from the N-terminus, the 73-residue chain is Large ribosomal subunit protein bL31 (73 aa).

This sequence belongs to the bacterial ribosomal protein bL31 family. Type A subfamily. Part of the 50S ribosomal subunit.

Binds the 23S rRNA. The chain is Large ribosomal subunit protein bL31 from Rhodospirillum centenum (strain ATCC 51521 / SW).